Here is a 231-residue protein sequence, read N- to C-terminus: MAKKGKKYQEAANKVDRTKHYSVEEAISLAKETSIANFDASVEVAFRLGIDTRKNDQQIRGAVVLPNGTGKSQRVLVFAKGDKITEAEEAGADYVGESEYVQKIQQGWFDFDVVVATPDMMGEVGKLGRVLGPKGLMPNPKTGTVTMDVKKAVEEIKAGKVEYRAEKAGIVHASIGKVSFSDEKLVENFKTLQDVLAKAKPSSAKGTYFKSVAVTTTMGPGVKIDTSSFKL.

The protein belongs to the universal ribosomal protein uL1 family. In terms of assembly, part of the 50S ribosomal subunit.

Its function is as follows. Binds directly to 23S rRNA. The L1 stalk is quite mobile in the ribosome, and is involved in E site tRNA release. In terms of biological role, protein L1 is also a translational repressor protein, it controls the translation of the L11 operon by binding to its mRNA. The protein is Large ribosomal subunit protein uL1 of Staphylococcus haemolyticus (strain JCSC1435).